Consider the following 528-residue polypeptide: ATP synthase subunit alpha 1 (528 aa).

ATP is bound at residue 169–176 (GDRQTGKT).

This sequence belongs to the ATPase alpha/beta chains family. As to quaternary structure, F-type ATPases have 2 components, CF(1) - the catalytic core - and CF(0) - the membrane proton channel. CF(1) has five subunits: alpha(3), beta(3), gamma(1), delta(1), epsilon(1). CF(0) has three main subunits: a(1), b(2) and c(9-12). The alpha and beta chains form an alternating ring which encloses part of the gamma chain. CF(1) is attached to CF(0) by a central stalk formed by the gamma and epsilon chains, while a peripheral stalk is formed by the delta and b chains.

It localises to the cell membrane. The enzyme catalyses ATP + H2O + 4 H(+)(in) = ADP + phosphate + 5 H(+)(out). Produces ATP from ADP in the presence of a proton gradient across the membrane. The alpha chain is a regulatory subunit. In Mycoplasmopsis pulmonis (strain UAB CTIP) (Mycoplasma pulmonis), this protein is ATP synthase subunit alpha 1.